Here is a 119-residue protein sequence, read N- to C-terminus: Beta-2-microglobulin (119 aa).

The N-terminal stretch at 1 to 20 is a signal peptide; sequence MARFVVVPLLVLVSLFGLEA. The Ig-like C1-type domain maps to 25–114; sequence PKIQVYSRYP…VTFSTPKTVK (90 aa). Cys45 and Cys100 are disulfide-bonded.

The protein belongs to the beta-2-microglobulin family. Heterodimer of an alpha chain and a beta chain. Beta-2-microglobulin is the beta-chain of major histocompatibility complex class I molecules.

It is found in the secreted. Functionally, component of the class I major histocompatibility complex (MHC). Involved in the presentation of peptide antigens to the immune system. The sequence is that of Beta-2-microglobulin (B2M) from Saguinus oedipus (Cotton-top tamarin).